The sequence spans 1760 residues: Cilia- and flagella-associated protein 44 (1760 aa).

5 WD repeats span residues 119 to 160 (GATK…MVLR), 163 to 202 (CHNT…TGLK), 213 to 251 (LEIS…CCFA), 276 to 315 (CHEG…VAEG), and 388 to 427 (FNGG…ELYK). Positions 1155–1165 (RQEEKLREQTA) are enriched in basic and acidic residues. Positions 1155–1224 (RQEEKLREQT…FGTAAARTRS (70 aa)) are disordered. The segment covering 1181–1190 (PATNTDTSGA) has biased composition (polar residues). A compositionally biased stretch (basic and acidic residues) spans 1194-1205 (ATRRSEGEDSRK). Residues 1348 to 1389 (YDEARNSRDRCLREMEELQRLVQDQTASIEKLQEANKVFRRE) adopt a coiled-coil conformation. Residues 1420–1444 (HSDMSGNDDDITSDDDDDDDMGEDE) form a disordered region. Acidic residues predominate over residues 1425–1444 (GNDDDITSDDDDDDDMGEDE).

The protein belongs to the CFAP44 family.

It is found in the cell projection. Its subcellular location is the cilium. The protein resides in the flagellum. It localises to the cytoplasm. The protein localises to the cytoskeleton. It is found in the flagellum axoneme. Flagellar protein involved in flagellum axoneme organization and function. The chain is Cilia- and flagella-associated protein 44 from Trypanosoma brucei brucei (strain 927/4 GUTat10.1).